The following is a 339-amino-acid chain: Senescence-specific cysteine protease SAG39 (339 aa).

Positions 1 to 23 (MAMAKALLFAILGCLCLCSAVLA) are cleaved as a signal peptide. Intrachain disulfides connect C144–C187, C178–C220, and C276–C328. C147 is a catalytic residue. Catalysis depends on residues H282 and N303.

Belongs to the peptidase C1 family.

The protein localises to the vacuole. In terms of biological role, cysteine protease that may have a developmental senescence specific cell death function during apoptosis, heavy metal detoxification, and hypersensitive response. This chain is Senescence-specific cysteine protease SAG39, found in Oryza sativa subsp. indica (Rice).